We begin with the raw amino-acid sequence, 146 residues long: Large ribosomal subunit protein uL15 (146 aa).

The disordered stretch occupies residues 1-58 (MNLSNLRAPKKANRNRKRVGRGMGSGHGKTSTRGHKGQRSRSGSRSMRGFEGGQMPLH). Basic residues-rich tracts occupy residues 8-20 (APKKANRNRKRVG) and 30-39 (TSTRGHKGQR). The segment covering 40–49 (SRSGSRSMRG) has biased composition (low complexity).

The protein belongs to the universal ribosomal protein uL15 family. As to quaternary structure, part of the 50S ribosomal subunit.

Its function is as follows. Binds to the 23S rRNA. This Acidobacterium capsulatum (strain ATCC 51196 / DSM 11244 / BCRC 80197 / JCM 7670 / NBRC 15755 / NCIMB 13165 / 161) protein is Large ribosomal subunit protein uL15.